Reading from the N-terminus, the 406-residue chain is Mitochondrial potassium channel (406 aa).

A mitochondrion-targeting transit peptide spans 1–35 (MTGCSPVFAMQHVVGVPRILVRRTFLGTDVTMTRT). Residues 36 to 198 (LCSPGPREKR…KERTRAERTK (163 aa)) lie on the Mitochondrial matrix side of the membrane. Residues 113 to 140 (VREAREGLEAQQTKLKEVRDRLDRVSRE) adopt a coiled-coil conformation. A helical membrane pass occupies residues 199–219 (NWSLIGSVLGALIGVAGSTYV). Residues 220–382 (NRVRLQELKA…LEAQANRNTV (163 aa)) are Mitochondrial intermembrane-facing. The helical transmembrane segment at 383 to 403 (SSTLVTCVTFLATLPLLYMLF) threads the bilayer. The Mitochondrial matrix segment spans residues 404-406 (KTS).

The mitochondrial potassium channel (mitoK(ATP)) is composed of 4 subunits of CCDC51/MITOK and 4 subunits of ABCB8/MITOSUR.

It is found in the mitochondrion inner membrane. It catalyses the reaction K(+)(in) = K(+)(out). With respect to regulation, inhibited by ATP via mitoK(ATP) channel. Its function is as follows. Pore-forming subunit of the mitochondrial ATP-gated potassium channel (mitoK(ATP)). Together with ATP-binding subunit ABCB8/MITOSUR of the mitoK(ATP) channel, mediates ATP-dependent K(+) currents across the mitochondrial inner membrane. An increase in ATP intracellular levels closes the channel, inhibiting K(+) transport, whereas a decrease in ATP levels enhances K(+) uptake in the mitochondrial matrix. May contribute to the homeostatic control of cellular metabolism under stress conditions by regulating the mitochondrial matrix volume. This chain is Mitochondrial potassium channel, found in Mus musculus (Mouse).